Consider the following 362-residue polypeptide: MADEQFPAAATALEEYQSIEEQMASPEVVSNPDKLRKLGRRHAELGAIVDAYKAWLQVKDDLAAAQEMAGEDADFAEEAKRLEDELPGVEEKLRTALIPRDPDDARDTIMEIKAGTGGEEAALFAGDLLRMYTRYAEKRGWSVNVQSENTTELGGVKDVQIAIRAKGTPAPEDGVWASMKYEGGVHRVQRIPVTESQGRIQTSAAGVIVFPEADEDDDEIEIDPKDLKIDIFMSSGPGGQSVNTTYSAVRMTHLPTGITVNMQDEKSQIQNRAAALRVLKSRLLAMKHEQEAAEAADMRHSQVRSLDRSERIRTYNFPENRIVDHRTNYKAYNLDAVLDGDLQAVIDSDIQADEADRLANQK.

Gln-240 is modified (N5-methylglutamine).

This sequence belongs to the prokaryotic/mitochondrial release factor family. In terms of processing, methylated by PrmC. Methylation increases the termination efficiency of RF1.

It localises to the cytoplasm. Its function is as follows. Peptide chain release factor 1 directs the termination of translation in response to the peptide chain termination codons UAG and UAA. This is Peptide chain release factor 1 from Bifidobacterium longum (strain DJO10A).